Here is a 439-residue protein sequence, read N- to C-terminus: GTPase Der (439 aa).

EngA-type G domains are found at residues 2 to 168 (ATVL…EEKG) and 181 to 357 (IKIA…SSYT). GTP-binding positions include 8–15 (GKPNVGKS), 55–59 (DTCGV), 118–121 (NKTE), 187–194 (GRPNVGKS), 234–238 (DTAGL), and 300–303 (NKWD). The 82-residue stretch at 358–439 (TKVPSSALNS…PIFLKFKKSR (82 aa)) folds into the KH-like domain.

It belongs to the TRAFAC class TrmE-Era-EngA-EngB-Septin-like GTPase superfamily. EngA (Der) GTPase family. In terms of assembly, associates with the 50S ribosomal subunit.

Its function is as follows. GTPase that plays an essential role in the late steps of ribosome biogenesis. The polypeptide is GTPase Der (Thermotoga neapolitana (strain ATCC 49049 / DSM 4359 / NBRC 107923 / NS-E)).